Here is a 254-residue protein sequence, read N- to C-terminus: Pyridoxine 5'-phosphate synthase (254 aa).

3-amino-2-oxopropyl phosphate is bound at residue Asn-12. Position 14-15 (14-15 (DH)) interacts with 1-deoxy-D-xylulose 5-phosphate. Arg-23 is a binding site for 3-amino-2-oxopropyl phosphate. His-48 functions as the Proton acceptor in the catalytic mechanism. Positions 50 and 55 each coordinate 1-deoxy-D-xylulose 5-phosphate. Catalysis depends on Glu-75, which acts as the Proton acceptor. 1-deoxy-D-xylulose 5-phosphate is bound at residue Thr-105. The active-site Proton donor is His-199. Residues Gly-200 and 221–222 (GF) each bind 3-amino-2-oxopropyl phosphate.

It belongs to the PNP synthase family. As to quaternary structure, homooctamer; tetramer of dimers.

The protein localises to the cytoplasm. It catalyses the reaction 3-amino-2-oxopropyl phosphate + 1-deoxy-D-xylulose 5-phosphate = pyridoxine 5'-phosphate + phosphate + 2 H2O + H(+). It functions in the pathway cofactor biosynthesis; pyridoxine 5'-phosphate biosynthesis; pyridoxine 5'-phosphate from D-erythrose 4-phosphate: step 5/5. Functionally, catalyzes the complicated ring closure reaction between the two acyclic compounds 1-deoxy-D-xylulose-5-phosphate (DXP) and 3-amino-2-oxopropyl phosphate (1-amino-acetone-3-phosphate or AAP) to form pyridoxine 5'-phosphate (PNP) and inorganic phosphate. This chain is Pyridoxine 5'-phosphate synthase, found in Rhodopseudomonas palustris (strain TIE-1).